A 233-amino-acid polypeptide reads, in one-letter code: Protein FAM204A (233 aa).

Disordered regions lie at residues 1 to 57 (MWSG…PSTE) and 79 to 127 (KFQE…ETQW). Residues 13-24 (SDVELNSDDDTT) show a composition bias toward acidic residues. The span at 34-46 (EGKEDGTFEKTEM) shows a compositional bias: basic and acidic residues. Residues 98 to 109 (EKKKRKRSRKGK) are compositionally biased toward basic residues. A coiled-coil region spans residues 144–164 (VKRKKVEKSGLEKRIDQAVEE).

This Bos taurus (Bovine) protein is Protein FAM204A (FAM204A).